Here is an 88-residue protein sequence, read N- to C-terminus: Small ribosomal subunit protein bS20 (88 aa).

The disordered stretch occupies residues 1-25; it reads MANSAQARKRARQAVAQNAHNSSLR.

This sequence belongs to the bacterial ribosomal protein bS20 family.

In terms of biological role, binds directly to 16S ribosomal RNA. The protein is Small ribosomal subunit protein bS20 of Cupriavidus pinatubonensis (strain JMP 134 / LMG 1197) (Cupriavidus necator (strain JMP 134)).